The primary structure comprises 27 residues: KIPNILKGGLKSICKHRKYLDKACAAI.

In terms of assembly, heterodimer composed of subunit A and subunit B (DELTA-PSDTX-Pp1a); disulfide-linked. As to expression, expressed by the venom gland.

It is found in the secreted. In terms of biological role, this heterodimer has insecticidal and cytotoxic properties. Induces immediate paralysis when injected into blowflies (Lucilia cuprina), and then death within 24 hours. Also inhibits the growth of Aedes albopictus mosquito C6/36 cells. The polypeptide is DELTA-pseudomyrmecitoxin-Pp1a subunit A (Pseudomyrmex penetrator (Ant)).